A 361-amino-acid chain; its full sequence is Phospho-N-acetylmuramoyl-pentapeptide-transferase (361 aa).

10 helical membrane passes run 26–46 (AILGILTALLISLVIGPVMIR), 73–93 (TMGGALILVAIAISTLLWADL), 97–117 (YVWVVLLVTLLFGAIGWVDDY), 134–154 (YFWQSVIGATAAIVLYVTASM), 168–188 (VSLTLGPVLFILLTYFVIVGS), 200–220 (GLAIMPTVMVAGALAIFAYLS), 237–257 (TGELIIFCGALVGAGLGFLWF), 264–284 (VFMGDVGALALGAALGTVAVI), 289–309 (IVLFIMGGVFVMETISVILQV), and 340–360 (IVRFWVVTVVLVLIGLASLKI).

Belongs to the glycosyltransferase 4 family. MraY subfamily. Mg(2+) is required as a cofactor.

The protein localises to the cell inner membrane. The catalysed reaction is UDP-N-acetyl-alpha-D-muramoyl-L-alanyl-gamma-D-glutamyl-meso-2,6-diaminopimeloyl-D-alanyl-D-alanine + di-trans,octa-cis-undecaprenyl phosphate = di-trans,octa-cis-undecaprenyl diphospho-N-acetyl-alpha-D-muramoyl-L-alanyl-D-glutamyl-meso-2,6-diaminopimeloyl-D-alanyl-D-alanine + UMP. It functions in the pathway cell wall biogenesis; peptidoglycan biosynthesis. In terms of biological role, catalyzes the initial step of the lipid cycle reactions in the biosynthesis of the cell wall peptidoglycan: transfers peptidoglycan precursor phospho-MurNAc-pentapeptide from UDP-MurNAc-pentapeptide onto the lipid carrier undecaprenyl phosphate, yielding undecaprenyl-pyrophosphoryl-MurNAc-pentapeptide, known as lipid I. This chain is Phospho-N-acetylmuramoyl-pentapeptide-transferase, found in Marinobacter nauticus (strain ATCC 700491 / DSM 11845 / VT8) (Marinobacter aquaeolei).